Consider the following 217-residue polypeptide: Protein-methionine-sulfoxide reductase heme-binding subunit MsrQ (217 aa).

The next 4 helical transmembrane spans lie at 82 to 102, 118 to 138, 150 to 170, and 180 to 200; these read MLGL…LLVD, PFIT…ATST, WQWL…HYWW, and EVSI…WWVW.

It belongs to the MsrQ family. In terms of assembly, heterodimer of a catalytic subunit (MsrP) and a heme-binding subunit (MsrQ). It depends on FMN as a cofactor. The cofactor is heme b.

The protein localises to the cell inner membrane. Part of the MsrPQ system that repairs oxidized periplasmic proteins containing methionine sulfoxide residues (Met-O), using respiratory chain electrons. Thus protects these proteins from oxidative-stress damage caused by reactive species of oxygen and chlorine generated by the host defense mechanisms. MsrPQ is essential for the maintenance of envelope integrity under bleach stress, rescuing a wide series of structurally unrelated periplasmic proteins from methionine oxidation. MsrQ provides electrons for reduction to the reductase catalytic subunit MsrP, using the quinone pool of the respiratory chain. This Ralstonia nicotianae (strain ATCC BAA-1114 / GMI1000) (Ralstonia solanacearum) protein is Protein-methionine-sulfoxide reductase heme-binding subunit MsrQ.